A 106-amino-acid polypeptide reads, in one-letter code: Vacuolar ATPase assembly integral membrane protein VMA21 homolog (106 aa).

A disordered region spans residues 1–26; the sequence is MSNKNKKSGGAGNGAAQKQTRQQSHD. Residues 1–32 lie on the Cytoplasmic side of the membrane; sequence MSNKNKKSGGAGNGAAQKQTRQQSHDSQDYSS. A helical transmembrane segment spans residues 33-53; it reads FKIVLFYCMLIVFLPVVTFFL. Over 54–69 the chain is Lumenal; it reads LKGFVLDRFFSLSEVK. The helical transmembrane segment at 70-90 threads the bilayer; the sequence is VNIASAVGAVVSLHIALGLYI. Residues 91 to 106 are Cytoplasmic-facing; that stretch reads YRAYFGATGSKAVKED.

Belongs to the VMA21 family.

The protein resides in the endoplasmic reticulum membrane. The protein localises to the endoplasmic reticulum-Golgi intermediate compartment membrane. It localises to the cytoplasmic vesicle. Its subcellular location is the COPII-coated vesicle membrane. Required for the assembly of the V0 complex of the vacuolar ATPase (V-ATPase) in the endoplasmic reticulum. This chain is Vacuolar ATPase assembly integral membrane protein VMA21 homolog, found in Drosophila ananassae (Fruit fly).